Reading from the N-terminus, the 873-residue chain is uncharacterized protein (873 aa).

Disordered stretches follow at residues 1-24, 175-251, 375-423, 506-540, 568-592, 662-773, and 822-855; these read MSNK…SMSK, SSAV…TSIS, PSRH…AKKP, DSES…ATRS, DQSS…APEY, ANDS…TSQI, and ANPY…EEPI. A compositionally biased stretch (basic and acidic residues) spans 211-225; that stretch reads KDSDRSQTKNTHEET. Residues 376–385 show a composition bias toward basic residues; sequence SRHHSHRKKE. The segment covering 574–586 has biased composition (basic residues); the sequence is PGRHFGKTGRSHF. A compositionally biased stretch (low complexity) spans 665-686; that stretch reads SPNSSESLESLNNQSYSSSPYS. Residues 698–740 show a composition bias toward polar residues; the sequence is QSLNDSPQTSDFKASNLNDSSSNVHSIFQTRETTSPSVQNKTP. Basic and acidic residues predominate over residues 743 to 755; the sequence is YHRELKSSKDGHE. Low complexity predominate over residues 758–773; that stretch reads SPLVSSSPSGSFTSQI. The span at 823 to 855 shows a compositional bias: polar residues; sequence NPYSTNNDGNPSNNTSDVEVNETSMNDNSEEPI.

The protein localises to the cytoplasm. The protein resides in the vacuole membrane. This is an uncharacterized protein from Schizosaccharomyces pombe (strain 972 / ATCC 24843) (Fission yeast).